We begin with the raw amino-acid sequence, 911 residues long: Beta-galactosidase 12 (911 aa).

Residues methionine 1–alanine 25 form the signal peptide. Glutamate 192 acts as the Proton donor in catalysis. Glutamate 262 acts as the Nucleophile in catalysis. 4 N-linked (GlcNAc...) asparagine glycosylation sites follow: asparagine 263, asparagine 389, asparagine 473, and asparagine 777. The SUEL-type lectin domain maps to glutamate 744–alanine 831.

Belongs to the glycosyl hydrolase 35 family.

The protein resides in the secreted. It is found in the extracellular space. Its subcellular location is the apoplast. The catalysed reaction is Hydrolysis of terminal non-reducing beta-D-galactose residues in beta-D-galactosides.. The protein is Beta-galactosidase 12 of Oryza sativa subsp. japonica (Rice).